Here is a 157-residue protein sequence, read N- to C-terminus: 6,7-dimethyl-8-ribityllumazine synthase (157 aa).

Residues phenylalanine 22, 57-59 (AYE), and 81-83 (TVI) contribute to the 5-amino-6-(D-ribitylamino)uracil site. (2S)-2-hydroxy-3-oxobutyl phosphate is bound at residue 86–87 (GT). Histidine 89 functions as the Proton donor in the catalytic mechanism. Phenylalanine 114 contributes to the 5-amino-6-(D-ribitylamino)uracil binding site. Arginine 128 is a binding site for (2S)-2-hydroxy-3-oxobutyl phosphate.

The protein belongs to the DMRL synthase family. In terms of assembly, forms an icosahedral capsid composed of 60 subunits, arranged as a dodecamer of pentamers.

It catalyses the reaction (2S)-2-hydroxy-3-oxobutyl phosphate + 5-amino-6-(D-ribitylamino)uracil = 6,7-dimethyl-8-(1-D-ribityl)lumazine + phosphate + 2 H2O + H(+). It participates in cofactor biosynthesis; riboflavin biosynthesis; riboflavin from 2-hydroxy-3-oxobutyl phosphate and 5-amino-6-(D-ribitylamino)uracil: step 1/2. Its function is as follows. Catalyzes the formation of 6,7-dimethyl-8-ribityllumazine by condensation of 5-amino-6-(D-ribitylamino)uracil with 3,4-dihydroxy-2-butanone 4-phosphate. This is the penultimate step in the biosynthesis of riboflavin. The protein is 6,7-dimethyl-8-ribityllumazine synthase of Pasteurella multocida (strain Pm70).